The sequence spans 126 residues: Large ribosomal subunit protein bL12 (126 aa).

This sequence belongs to the bacterial ribosomal protein bL12 family. Homodimer. Part of the ribosomal stalk of the 50S ribosomal subunit. Forms a multimeric L10(L12)X complex, where L10 forms an elongated spine to which 2 to 4 L12 dimers bind in a sequential fashion. Binds GTP-bound translation factors.

In terms of biological role, forms part of the ribosomal stalk which helps the ribosome interact with GTP-bound translation factors. Is thus essential for accurate translation. This chain is Large ribosomal subunit protein bL12, found in Bifidobacterium longum subsp. infantis (strain ATCC 15697 / DSM 20088 / JCM 1222 / NCTC 11817 / S12).